A 294-amino-acid chain; its full sequence is Lipoyl synthase (294 aa).

7 residues coordinate [4Fe-4S] cluster: Cys-35, Cys-40, Cys-46, Cys-61, Cys-65, Cys-68, and Ser-275. Positions 46 to 264 constitute a Radical SAM core domain; that stretch reads CWGGGTATVM…REAGLGLGFR (219 aa).

This sequence belongs to the radical SAM superfamily. Lipoyl synthase family. Requires [4Fe-4S] cluster as cofactor.

The protein resides in the cytoplasm. It catalyses the reaction [[Fe-S] cluster scaffold protein carrying a second [4Fe-4S](2+) cluster] + N(6)-octanoyl-L-lysyl-[protein] + 2 oxidized [2Fe-2S]-[ferredoxin] + 2 S-adenosyl-L-methionine + 4 H(+) = [[Fe-S] cluster scaffold protein] + N(6)-[(R)-dihydrolipoyl]-L-lysyl-[protein] + 4 Fe(3+) + 2 hydrogen sulfide + 2 5'-deoxyadenosine + 2 L-methionine + 2 reduced [2Fe-2S]-[ferredoxin]. It functions in the pathway protein modification; protein lipoylation via endogenous pathway; protein N(6)-(lipoyl)lysine from octanoyl-[acyl-carrier-protein]: step 2/2. Functionally, catalyzes the radical-mediated insertion of two sulfur atoms into the C-6 and C-8 positions of the octanoyl moiety bound to the lipoyl domains of lipoate-dependent enzymes, thereby converting the octanoylated domains into lipoylated derivatives. The chain is Lipoyl synthase from Anaeromyxobacter sp. (strain Fw109-5).